A 369-amino-acid polypeptide reads, in one-letter code: Glutamine synthetase 2 cytoplasmic (369 aa).

The region spanning V32–G112 is the GS beta-grasp domain. The 251-residue stretch at K119–E369 folds into the GS catalytic domain.

This sequence belongs to the glutamine synthetase family. As to quaternary structure, homooctamer.

It localises to the cytoplasm. The enzyme catalyses L-glutamate + NH4(+) + ATP = L-glutamine + ADP + phosphate + H(+). The sequence is that of Glutamine synthetase 2 cytoplasmic (Gs2) from Drosophila melanogaster (Fruit fly).